Here is a 461-residue protein sequence, read N- to C-terminus: Trigger factor (461 aa).

Positions 169–256 (GDTAVIDFAG…LKDLKIKELP (88 aa)) constitute a PPIase FKBP-type domain. Residues 432 to 461 (PGEAIEPGSGEDAPPEVAAGATEPEAQPNS) form a disordered region.

Belongs to the FKBP-type PPIase family. Tig subfamily.

Its subcellular location is the cytoplasm. It catalyses the reaction [protein]-peptidylproline (omega=180) = [protein]-peptidylproline (omega=0). Involved in protein export. Acts as a chaperone by maintaining the newly synthesized protein in an open conformation. Functions as a peptidyl-prolyl cis-trans isomerase. The polypeptide is Trigger factor (Gloeobacter violaceus (strain ATCC 29082 / PCC 7421)).